A 134-amino-acid polypeptide reads, in one-letter code: Profilin (134 aa).

This sequence belongs to the profilin family. As to quaternary structure, interacts with host Tpm1. Interacts with protein A25.

It localises to the host cytoplasm. Functionally, participates in either intracellular transport of viral proteins or intercellular spread of the virus. Cellular profilins modulate actin filament dynamics (polymerization and depolymerization) via direct binding to actin through an actin-binding domain as well as by modulation of other actin-binding proteins. In contrast to cellular homologs, the poxvirus profilins seem to bind actin only weakly. In Ectromelia virus (strain Moscow) (ECTV), this protein is Profilin.